The sequence spans 359 residues: Protein HEXIM1 (359 aa).

The tract at residues 1–163 (MAEPFLSEYQ…RRRPSKKKRH (163 aa)) is disordered. Residues 9-19 (YQHQPQTSNCT) show a composition bias toward polar residues. Basic and acidic residues-rich tracts occupy residues 34-47 (PGAE…DSRW) and 84-93 (CLREGEKGQN). A phosphoserine mark is found at Ser97 and Ser98. Residues 148-163 (LGKKKHRRRPSKKKRH) show a composition bias toward basic residues. The basic region; mediates nuclear localization and interaction with 7SK snRNA and NR3C1 stretch occupies residues 150–177 (KKKHRRRPSKKKRHWKPYYKLTWEEKKK). Positions 202–205 (PYNT) are interaction with P-TEFb. The tract at residues 210 to 250 (MDDHDQEEPDLKTGLYSKRAAAKSDDTSDDDFMEEGGEEDG) is autoinhibitory acidic region; in absence of 7SK snRNA interacts with the basic region preventing interaction with P-TEFb and modulating subcellular localization. The interval 213-262 (HDQEEPDLKTGLYSKRAAAKSDDTSDDDFMEEGGEEDGGSDGMGGDGSEF) is disordered. A Phosphoserine modification is found at Ser233. Thr236 is subject to Phosphothreonine. Positions 236–251 (TSDDDFMEEGGEEDGG) are enriched in acidic residues. 3 positions are modified to phosphoserine: Ser237, Ser252, and Ser260. Positions 283 to 349 (SKQELIKEYL…LTENELHRQQ (67 aa)) form a coiled coil. Residues 286–314 (ELIKEYLELEKCLSRMEDENNRLRLESKR) form a mediates interaction with CCNT1 region. The tract at residues 310–355 (LESKRLGGDDARVRELELELDRLRAENLQLLTENELHRQQERAPLS) is required for inhibition of ESR1-dependent transcription.

Belongs to the HEXIM family. Homooligomer and heterooligomer with HEXIM2; probably dimeric. Core component of the 7SK RNP complex, at least composed of 7SK RNA, LARP7, MEPCE, HEXIM1 (or HEXIM2) and P-TEFb (composed of CDK9 and CCNT1/cyclin-T1). Interacts with the N-CoR complex through NCOR1. Interacts with ESR1 and NR3C1. May interact with NF-kappa-B through RELA. Interacts with CCNT2; mediates formation of a tripartite complex with KPNA2. Part of the HDP-RNP complex composed of at least HEXIM1, PRKDC, XRCC5, XRCC6, paraspeckle proteins (SFPQ, NONO, PSPC1, RBM14, and MATR3) and NEAT1 non-coding RNA. Ubiquitously expressed with higher expression in placenta. HEXIM1 and HEXIM2 are differentially expressed. Expressed in endocrine tissues.

It localises to the nucleus. The protein localises to the cytoplasm. Its function is as follows. Transcriptional regulator which functions as a general RNA polymerase II transcription inhibitor. Core component of the 7SK RNP complex: in cooperation with 7SK snRNA sequesters P-TEFb in a large inactive 7SK snRNP complex preventing RNA polymerase II phosphorylation and subsequent transcriptional elongation. May also regulate NF-kappa-B, ESR1, NR3C1 and CIITA-dependent transcriptional activity. Plays a role in the regulation of DNA virus-mediated innate immune response by assembling into the HDP-RNP complex, a complex that serves as a platform for IRF3 phosphorylation and subsequent innate immune response activation through the cGAS-STING pathway. This Homo sapiens (Human) protein is Protein HEXIM1 (HEXIM1).